Reading from the N-terminus, the 92-residue chain is UPF0250 protein Pmen_3793 (92 aa).

This sequence belongs to the UPF0250 family.

The protein is UPF0250 protein Pmen_3793 of Ectopseudomonas mendocina (strain ymp) (Pseudomonas mendocina).